The sequence spans 396 residues: Acetate kinase (396 aa).

Asparagine 7 provides a ligand contact to Mg(2+). Lysine 14 is an ATP binding site. Substrate is bound at residue arginine 88. Aspartate 145 (proton donor/acceptor) is an active-site residue. ATP-binding positions include 203–207 (HAGNG), 278–280 (DAR), and 326–330 (GIGEN). Glutamate 379 is a Mg(2+) binding site.

This sequence belongs to the acetokinase family. As to quaternary structure, homodimer. Mg(2+) is required as a cofactor. The cofactor is Mn(2+).

The protein resides in the cytoplasm. It catalyses the reaction acetate + ATP = acetyl phosphate + ADP. It participates in metabolic intermediate biosynthesis; acetyl-CoA biosynthesis; acetyl-CoA from acetate: step 1/2. Catalyzes the formation of acetyl phosphate from acetate and ATP. Can also catalyze the reverse reaction. This chain is Acetate kinase, found in Phytoplasma australiense.